Consider the following 262-residue polypeptide: Acyl-[acyl-carrier-protein]--UDP-N-acetylglucosamine O-acyltransferase (262 aa).

It belongs to the transferase hexapeptide repeat family. LpxA subfamily. Homotrimer.

Its subcellular location is the cytoplasm. The catalysed reaction is a (3R)-hydroxyacyl-[ACP] + UDP-N-acetyl-alpha-D-glucosamine = a UDP-3-O-[(3R)-3-hydroxyacyl]-N-acetyl-alpha-D-glucosamine + holo-[ACP]. Its pathway is glycolipid biosynthesis; lipid IV(A) biosynthesis; lipid IV(A) from (3R)-3-hydroxytetradecanoyl-[acyl-carrier-protein] and UDP-N-acetyl-alpha-D-glucosamine: step 1/6. In terms of biological role, involved in the biosynthesis of lipid A, a phosphorylated glycolipid that anchors the lipopolysaccharide to the outer membrane of the cell. The polypeptide is Acyl-[acyl-carrier-protein]--UDP-N-acetylglucosamine O-acyltransferase (Wigglesworthia glossinidia brevipalpis).